The sequence spans 280 residues: 3-methyl-2-oxobutanoate hydroxymethyltransferase (280 aa).

Positions 61 and 100 each coordinate Mg(2+). 3-methyl-2-oxobutanoate is bound by residues 61–62 (DS), Asp-100, and Lys-130. Glu-132 provides a ligand contact to Mg(2+). Residue Glu-198 is the Proton acceptor of the active site.

Belongs to the PanB family. Homodecamer; pentamer of dimers. Requires Mg(2+) as cofactor.

The protein localises to the cytoplasm. The enzyme catalyses 3-methyl-2-oxobutanoate + (6R)-5,10-methylene-5,6,7,8-tetrahydrofolate + H2O = 2-dehydropantoate + (6S)-5,6,7,8-tetrahydrofolate. It functions in the pathway cofactor biosynthesis; (R)-pantothenate biosynthesis; (R)-pantoate from 3-methyl-2-oxobutanoate: step 1/2. Its function is as follows. Catalyzes the reversible reaction in which hydroxymethyl group from 5,10-methylenetetrahydrofolate is transferred onto alpha-ketoisovalerate to form ketopantoate. This is 3-methyl-2-oxobutanoate hydroxymethyltransferase from Mycolicibacterium vanbaalenii (strain DSM 7251 / JCM 13017 / BCRC 16820 / KCTC 9966 / NRRL B-24157 / PYR-1) (Mycobacterium vanbaalenii).